Here is a 647-residue protein sequence, read N- to C-terminus: uncharacterized protein (647 aa).

This is an uncharacterized protein from Cryphonectria parasitica mycoreovirus 1 (strain 9B21) (CpMYRV-1).